Reading from the N-terminus, the 160-residue chain is Myosin regulatory light chain, smooth muscle (160 aa).

The residue at position 1 (Ser1) is a Blocked amino end (Ser). Residue Ser11 is modified to Phosphoserine. EF-hand domains lie at 20-55 (NQIQ…LGTA) and 88-123 (DPEE…MGDN). Residues Asp33, Asn35, Asp37, and Asp44 each contribute to the Ca(2+) site.

Functionally, in molluscan muscle, calcium regulation is associated with myosin rather than with actin. Muscle myosin contains two types of light chains: the catalytic light chain, essential for ATPase activity, and the regulatory light chain, a calcium-binding protein responsible for Ca(2+) dependent binding and Ca(2+) dependent Mg-ATPase activity. The polypeptide is Myosin regulatory light chain, smooth muscle (Spisula sachalinensis (Sakhalin surf-clam)).